The primary structure comprises 251 residues: Triosephosphate isomerase (251 aa).

12 to 14 is a substrate binding site; that stretch reads NWK. The Electrophile role is filled by His98. Glu168 (proton acceptor) is an active-site residue. Substrate is bound by residues Gly174, Ser213, and 234–235; that span reads GG.

Belongs to the triosephosphate isomerase family. Homodimer.

The protein resides in the cytoplasm. The enzyme catalyses D-glyceraldehyde 3-phosphate = dihydroxyacetone phosphate. It participates in carbohydrate biosynthesis; gluconeogenesis. It functions in the pathway carbohydrate degradation; glycolysis; D-glyceraldehyde 3-phosphate from glycerone phosphate: step 1/1. Its function is as follows. Involved in the gluconeogenesis. Catalyzes stereospecifically the conversion of dihydroxyacetone phosphate (DHAP) to D-glyceraldehyde-3-phosphate (G3P). In Afipia carboxidovorans (strain ATCC 49405 / DSM 1227 / KCTC 32145 / OM5) (Oligotropha carboxidovorans), this protein is Triosephosphate isomerase.